Here is a 1075-residue protein sequence, read N- to C-terminus: MLRNGNEGMSTIPGFSQIQFEGFCRFINQGLAEELEKFPTIKDPDHEIAFQLFAKGYQLLEPSIKERNAVYESLTYSSELYVSARLIFGFDVQKQTISIGNIPIMNSLGTFIINGIYRIVINQILLSPGIYYRSELDHKGISICTGTIISDWGGRLELAIDKKERIWARVSRKQKISILVLLSAMGLNLREILDNVSYPEIFLSFLNAKEKKRIESKEKAILEFYQQFACVGGDLVFSESLCEELQKKFFQQKCELGRVGRRNMNRRLNLDIPQNNTFLLPRDVLAATDHLIGMKFGTGILDDDDMNHLKNKRIRSVADLLQDQFGLALGRLQHAVQKTIRRVFIRQSKPTPQTLVTPTSTSILLITTYETFFGTYPLAQVFDQTNPLTQTVHGRKVSCLGPGGLTGRTASFRSRDIHPSHYGRICPIDTSEGINVGLTGSLAIHARIDHWWGSIESPFYEISEKAKEKKERQVVYLSPNRDEYYMIAAGNSLSLNQGIQEEQVVPARYRQEFLTIAWEQIHVRSIFPFQYFSIGGSLIPFIEHNDANRALMSSNMQRQAVPLSRSEKCIVGTGLERQTALDSRVSVIAEREGKIISSDSHKILLSSSGKTISIPLVAHRRSNKNTCMHQKPRVPRGKSIKKGQILAEGAATVGGELALGKNVLVAYMPWEGYNFEDAVLISERLVYEDIYTSFHIRKYEIQTDTTSQGSAEKITKQIPHLEEHLLRNLDRNGVVRLGSWVETGDILVGKLTPQIASESSYIAEAGLLRAIFGLEVSTSKETSLKLPIGGRGRVIDVKWIQRDPFDIMVRVYILQKREIKVGDKVAGRHGNKGIISKILPRQDMPYLQDGTPVDMVFNPLGVPSRMNVGQIFESSLGLAGDLLKKHYRIAPFDERYEQEASRKLVFSELYEASKQTKNPWVFEPEYPGKSRIFDGRTGDPFEQPVLIGKSYILKLIHQVDEKIHGRSTGPYSLVTQQPVRGRAKQGGQRIGEMEVWALEGFGVAHILQEILTYKSDHLIARQEILNATIWGKRVPNHEDPPESFRVLVRELRSLALELNHFLVSEKNFRVNREDV.

It belongs to the RNA polymerase beta chain family. In terms of assembly, in plastids the minimal PEP RNA polymerase catalytic core is composed of four subunits: alpha, beta, beta', and beta''. When a (nuclear-encoded) sigma factor is associated with the core the holoenzyme is formed, which can initiate transcription.

The protein resides in the plastid. It is found in the chloroplast. It carries out the reaction RNA(n) + a ribonucleoside 5'-triphosphate = RNA(n+1) + diphosphate. Functionally, DNA-dependent RNA polymerase catalyzes the transcription of DNA into RNA using the four ribonucleoside triphosphates as substrates. The chain is DNA-directed RNA polymerase subunit beta from Saccharum hybrid (Sugarcane).